The chain runs to 806 residues: Glycerol-3-phosphate acyltransferase (806 aa).

Positions 305–310 (CHRSHM) match the HXXXXD motif motif.

This sequence belongs to the GPAT/DAPAT family.

The protein localises to the cell inner membrane. It carries out the reaction sn-glycerol 3-phosphate + an acyl-CoA = a 1-acyl-sn-glycero-3-phosphate + CoA. The protein operates within phospholipid metabolism; CDP-diacylglycerol biosynthesis; CDP-diacylglycerol from sn-glycerol 3-phosphate: step 1/3. This is Glycerol-3-phosphate acyltransferase from Enterobacter sp. (strain 638).